A 989-amino-acid chain; its full sequence is Bifunctional glutamine synthetase adenylyltransferase/adenylyl-removing enzyme (989 aa).

An adenylyl removase region spans residues 1-473 (MRGPLEPDSA…HYANLFEDVA (473 aa)). An adenylyl transferase region spans residues 479–989 (DADLMFPPDE…FERILETAAE (511 aa)).

The protein belongs to the GlnE family. The cofactor is Mg(2+).

The enzyme catalyses [glutamine synthetase]-O(4)-(5'-adenylyl)-L-tyrosine + phosphate = [glutamine synthetase]-L-tyrosine + ADP. It catalyses the reaction [glutamine synthetase]-L-tyrosine + ATP = [glutamine synthetase]-O(4)-(5'-adenylyl)-L-tyrosine + diphosphate. Functionally, involved in the regulation of glutamine synthetase GlnA, a key enzyme in the process to assimilate ammonia. When cellular nitrogen levels are high, the C-terminal adenylyl transferase (AT) inactivates GlnA by covalent transfer of an adenylyl group from ATP to specific tyrosine residue of GlnA, thus reducing its activity. Conversely, when nitrogen levels are low, the N-terminal adenylyl removase (AR) activates GlnA by removing the adenylyl group by phosphorolysis, increasing its activity. The regulatory region of GlnE binds the signal transduction protein PII (GlnB) which indicates the nitrogen status of the cell. The sequence is that of Bifunctional glutamine synthetase adenylyltransferase/adenylyl-removing enzyme from Xanthobacter autotrophicus (strain ATCC BAA-1158 / Py2).